Here is a 1560-residue protein sequence, read N- to C-terminus: Lysine-specific demethylase 5C (1560 aa).

The JmjN domain occupies 14–55 (CPVFEPSWAEFRDPLGYIAKIRPIAEKSGICKIRPPADWQPP). The region spanning 79–169 (TRVKLNYLDQ…IVYPYEMYQS (91 aa)) is the ARID domain. Positions 197-207 (LRQSVQPSKFN) are enriched in polar residues. The segment at 197–227 (LRQSVQPSKFNSYGRRAKRLQPDPEPTEEDI) is disordered. Glycyl lysine isopeptide (Lys-Gly) (interchain with G-Cter in SUMO2) cross-links involve residues Lys205, Lys229, Lys244, and Lys274. Ser287 carries the post-translational modification Phosphoserine. Lys295 participates in a covalent cross-link: Glycyl lysine isopeptide (Lys-Gly) (interchain with G-Cter in SUMO2). Phosphoserine is present on residues Ser301 and Ser317. The PHD-type 1 zinc-finger motif lies at 326–372 (VCRMCSRGDEDDKLLLCDGCDDNYHIFCLLPPLPEIPKGVWRCPKCV). Tyr440 contributes to the 2-oxoglutarate binding site. The region spanning 468–634 (EYATSGWNLN…AGRQCIEHYR (167 aa)) is the JmjC domain. 2 residues coordinate Fe cation: His514 and Glu516. The 2-oxoglutarate site is built by Ser522, Asn524, and Lys532. His602 is a binding site for Fe cation. The segment at 707–759 (CIKCKTTCFLSALACYDCPDGLVCLSHINDLCKCSSSRQYLRYRYTLDELPAM) adopts a C5HC2 zinc-finger fold. A phosphoserine mark is found at Ser893 and Ser897. A Glycyl lysine isopeptide (Lys-Gly) (interchain with G-Cter in SUMO2) cross-link involves residue Lys1127. Residues 1161-1181 (ILQLRRTNSAKPSPLASSSTA) are disordered. The span at 1169–1181 (SAKPSPLASSSTA) shows a compositional bias: low complexity. The PHD-type 2 zinc finger occupies 1187 to 1248 (ICVCGQVLAG…DTKFLCPLCM (62 aa)). Disordered regions lie at residues 1316–1371 (QAEP…GSGK) and 1444–1560 (ERHG…QQQL). The span at 1335–1345 (PLREGSGKDMP) shows a compositional bias: basic and acidic residues. A Phosphoserine modification is found at Ser1359. The segment covering 1448-1463 (SRARGRALERRRRRKV) has biased composition (basic residues). Residues 1464-1481 (DRGGEGDDPAREELEPKR) are compositionally biased toward basic and acidic residues. The span at 1488–1503 (EAEEVQEEEELEEETG) shows a compositional bias: acidic residues. Positions 1516–1544 (SPSTQENQNGLEPAEGTTSGPSAPFSTLT) are enriched in polar residues.

This sequence belongs to the JARID1 histone demethylase family. Part of two distinct complexes, one containing E2F6, and the other containing REST. Interacts with ZMYND8. It depends on Fe(2+) as a cofactor. As to expression, expressed in all tissues examined. Highest levels found in brain and skeletal muscle.

It is found in the nucleus. It carries out the reaction N(6),N(6),N(6)-trimethyl-L-lysyl(4)-[histone H3] + 3 2-oxoglutarate + 3 O2 = L-lysyl(4)-[histone H3] + 3 formaldehyde + 3 succinate + 3 CO2. The inhibitor KDOAM-25 and others inhibit its demethylase activity, resulting to cell cycle arrest in myeloma cells. Histone demethylase that specifically demethylates 'Lys-4' of histone H3, thereby playing a central role in histone code. Does not demethylate histone H3 'Lys-9', H3 'Lys-27', H3 'Lys-36', H3 'Lys-79' or H4 'Lys-20'. Demethylates trimethylated and dimethylated but not monomethylated H3 'Lys-4'. Participates in transcriptional repression of neuronal genes by recruiting histone deacetylases and REST at neuron-restrictive silencer elements. Represses the CLOCK-BMAL1 heterodimer-mediated transcriptional activation of the core clock component PER2. This is Lysine-specific demethylase 5C from Homo sapiens (Human).